We begin with the raw amino-acid sequence, 224 residues long: Cytidylate kinase (224 aa).

11 to 19 contacts ATP; the sequence is GPASAGKST.

This sequence belongs to the cytidylate kinase family. Type 1 subfamily.

The protein resides in the cytoplasm. It carries out the reaction CMP + ATP = CDP + ADP. It catalyses the reaction dCMP + ATP = dCDP + ADP. The chain is Cytidylate kinase from Ligilactobacillus salivarius (strain UCC118) (Lactobacillus salivarius).